The following is a 299-amino-acid chain: Ribosomal protein L11 methyltransferase (299 aa).

T150, G171, D193, and N234 together coordinate S-adenosyl-L-methionine.

Belongs to the methyltransferase superfamily. PrmA family.

The protein resides in the cytoplasm. It carries out the reaction L-lysyl-[protein] + 3 S-adenosyl-L-methionine = N(6),N(6),N(6)-trimethyl-L-lysyl-[protein] + 3 S-adenosyl-L-homocysteine + 3 H(+). Methylates ribosomal protein L11. The sequence is that of Ribosomal protein L11 methyltransferase from Dictyoglomus turgidum (strain DSM 6724 / Z-1310).